A 124-amino-acid chain; its full sequence is Large ribosomal subunit protein bL19 (124 aa).

Belongs to the bacterial ribosomal protein bL19 family.

This protein is located at the 30S-50S ribosomal subunit interface and may play a role in the structure and function of the aminoacyl-tRNA binding site. The polypeptide is Large ribosomal subunit protein bL19 (Dinoroseobacter shibae (strain DSM 16493 / NCIMB 14021 / DFL 12)).